Here is a 419-residue protein sequence, read N- to C-terminus: Probable glycosidase C21B10.07 (419 aa).

2 disordered regions span residues methionine 1 to serine 20 and aspartate 29 to asparagine 67. Residues proline 30–leucine 59 are compositionally biased toward basic and acidic residues. Residues phenylalanine 88 to glycine 108 form a helical membrane-spanning segment. The 266-residue stretch at proline 122–alanine 387 folds into the GH16 domain. The active-site Nucleophile is the glutamate 237. Residue glutamate 242 is the Proton donor of the active site.

It belongs to the glycosyl hydrolase 16 family.

It is found in the membrane. This chain is Probable glycosidase C21B10.07, found in Schizosaccharomyces pombe (strain 972 / ATCC 24843) (Fission yeast).